The sequence spans 141 residues: ATP synthase epsilon chain (141 aa).

It belongs to the ATPase epsilon chain family. As to quaternary structure, F-type ATPases have 2 components, CF(1) - the catalytic core - and CF(0) - the membrane proton channel. CF(1) has five subunits: alpha(3), beta(3), gamma(1), delta(1), epsilon(1). CF(0) has three main subunits: a, b and c.

The protein localises to the cell inner membrane. Its function is as follows. Produces ATP from ADP in the presence of a proton gradient across the membrane. The chain is ATP synthase epsilon chain from Hahella chejuensis (strain KCTC 2396).